We begin with the raw amino-acid sequence, 184 residues long: Guanylate kinase (184 aa).

The Guanylate kinase-like domain maps to 5-183 (KKLIIITGPS…TVKEVLKIIK (179 aa)). 12–19 (GPSGVGKG) is an ATP binding site.

Belongs to the guanylate kinase family.

The protein localises to the cytoplasm. It carries out the reaction GMP + ATP = GDP + ADP. Functionally, essential for recycling GMP and indirectly, cGMP. This Prochlorococcus marinus subsp. pastoris (strain CCMP1986 / NIES-2087 / MED4) protein is Guanylate kinase.